A 445-amino-acid polypeptide reads, in one-letter code: Exodeoxyribonuclease 7 large subunit (445 aa).

This sequence belongs to the XseA family. As to quaternary structure, heterooligomer composed of large and small subunits.

The protein localises to the cytoplasm. The enzyme catalyses Exonucleolytic cleavage in either 5'- to 3'- or 3'- to 5'-direction to yield nucleoside 5'-phosphates.. Functionally, bidirectionally degrades single-stranded DNA into large acid-insoluble oligonucleotides, which are then degraded further into small acid-soluble oligonucleotides. This is Exodeoxyribonuclease 7 large subunit from Staphylococcus epidermidis (strain ATCC 35984 / DSM 28319 / BCRC 17069 / CCUG 31568 / BM 3577 / RP62A).